The primary structure comprises 479 residues: Cysteine--tRNA ligase (479 aa).

Residue Cys-29 participates in Zn(2+) binding. The short motif at 31 to 41 is the 'HIGH' region element; it reads ATVQGAPHIGH. Positions 171–197 are disordered; it reads QRVEDMQDAPDADPRGKRDPRDFALWK. The segment covering 182 to 197 has biased composition (basic and acidic residues); it reads ADPRGKRDPRDFALWK. Zn(2+)-binding residues include Cys-224, His-249, and Glu-253. The short motif at 280–284 is the 'KMSKS' region element; sequence KMSKS. Position 283 (Lys-283) interacts with ATP.

Belongs to the class-I aminoacyl-tRNA synthetase family. In terms of assembly, monomer. Zn(2+) serves as cofactor.

The protein resides in the cytoplasm. It carries out the reaction tRNA(Cys) + L-cysteine + ATP = L-cysteinyl-tRNA(Cys) + AMP + diphosphate. The sequence is that of Cysteine--tRNA ligase from Kocuria rhizophila (strain ATCC 9341 / DSM 348 / NBRC 103217 / DC2201).